Reading from the N-terminus, the 190-residue chain is dITP/XTP pyrophosphatase (190 aa).

Residue 7–12 coordinates substrate; sequence THNPNK. Glutamate 39 and aspartate 68 together coordinate Mg(2+). Aspartate 68 (proton acceptor) is an active-site residue. Substrate-binding positions include threonine 69, 148–151, lysine 171, and 176–177; these read FGYD and HR.

This sequence belongs to the HAM1 NTPase family. As to quaternary structure, homodimer. The cofactor is Mg(2+).

The catalysed reaction is XTP + H2O = XMP + diphosphate + H(+). It carries out the reaction dITP + H2O = dIMP + diphosphate + H(+). It catalyses the reaction ITP + H2O = IMP + diphosphate + H(+). In terms of biological role, pyrophosphatase that catalyzes the hydrolysis of nucleoside triphosphates to their monophosphate derivatives, with a high preference for the non-canonical purine nucleotides XTP (xanthosine triphosphate), dITP (deoxyinosine triphosphate) and ITP. Seems to function as a house-cleaning enzyme that removes non-canonical purine nucleotides from the nucleotide pool, thus preventing their incorporation into DNA/RNA and avoiding chromosomal lesions. This chain is dITP/XTP pyrophosphatase, found in Christiangramia forsetii (strain DSM 17595 / CGMCC 1.15422 / KT0803) (Gramella forsetii).